The following is a 147-amino-acid chain: Small ribosomal subunit protein uS5 (147 aa).

An S5 DRBM domain is found at 9–72 (FEEVIVDIGR…DDAFKNIIHV (64 aa)).

The protein belongs to the universal ribosomal protein uS5 family. In terms of assembly, part of the 30S ribosomal subunit. Contacts proteins S4 and S8.

Its function is as follows. With S4 and S12 plays an important role in translational accuracy. Located at the back of the 30S subunit body where it stabilizes the conformation of the head with respect to the body. The polypeptide is Small ribosomal subunit protein uS5 (Campylobacter curvus (strain 525.92)).